A 165-amino-acid chain; its full sequence is uncharacterized protein (165 aa).

It belongs to the IIV-6 415R family.

This is an uncharacterized protein from Invertebrate iridescent virus 3 (IIV-3).